Consider the following 302-residue polypeptide: Aspartate carbamoyltransferase catalytic subunit (302 aa).

Carbamoyl phosphate contacts are provided by Arg-51 and Thr-52. An L-aspartate-binding site is contributed by Lys-80. Carbamoyl phosphate is bound by residues Arg-101, His-129, and Gln-132. Residues Arg-162 and Arg-224 each coordinate L-aspartate. Carbamoyl phosphate is bound by residues Leu-263 and Pro-264.

It belongs to the aspartate/ornithine carbamoyltransferase superfamily. ATCase family. Heterododecamer (2C3:3R2) of six catalytic PyrB chains organized as two trimers (C3), and six regulatory PyrI chains organized as three dimers (R2).

The catalysed reaction is carbamoyl phosphate + L-aspartate = N-carbamoyl-L-aspartate + phosphate + H(+). It functions in the pathway pyrimidine metabolism; UMP biosynthesis via de novo pathway; (S)-dihydroorotate from bicarbonate: step 2/3. Catalyzes the condensation of carbamoyl phosphate and aspartate to form carbamoyl aspartate and inorganic phosphate, the committed step in the de novo pyrimidine nucleotide biosynthesis pathway. This chain is Aspartate carbamoyltransferase catalytic subunit, found in Azobacteroides pseudotrichonymphae genomovar. CFP2.